Reading from the N-terminus, the 370-residue chain is MQTAARRSFDYDMPLIQTPTSACQIRQAWAKVADTPDRETADRLKDEIKALLKEKNAVLVAHYYVDPLIQDLALETGGCVGDSLEMARFGAEHEAGTLVVAGVRFMGESAKILCPEKTVLMPDLEAECSLDLGCPEEAFSAFCDQHPDRTVVVYANTSAAVKARADWVVTSSVALEIVSYLKSRGEKLIWGPDRHLGDYICRETGADMLLWQGSCIVHNEFKGQELAALKAEHPEAVVLVHPESPQSVIELGDVVGSTSKLLKAAVSRPEKKFIVATDLGILHEMQKQAPDKQFIAAPTAGNGGSCKSCAFCPWMAMNSLGGIKYALTSGRNEILLDRKLGEAAKLPLQRMLDFAAGLKKKDVFNGMGPA.

Iminosuccinate-binding residues include H62 and S83. C128 is a binding site for [4Fe-4S] cluster. Iminosuccinate is bound by residues 154-156 (YAN) and S171. C215 is a binding site for [4Fe-4S] cluster. Iminosuccinate contacts are provided by residues 241–243 (HPE) and T258. A [4Fe-4S] cluster-binding site is contributed by C312.

Belongs to the quinolinate synthase family. Type 1 subfamily. [4Fe-4S] cluster is required as a cofactor.

Its subcellular location is the cytoplasm. It catalyses the reaction iminosuccinate + dihydroxyacetone phosphate = quinolinate + phosphate + 2 H2O + H(+). The protein operates within cofactor biosynthesis; NAD(+) biosynthesis; quinolinate from iminoaspartate: step 1/1. Catalyzes the condensation of iminoaspartate with dihydroxyacetone phosphate to form quinolinate. The polypeptide is Quinolinate synthase (Neisseria meningitidis serogroup B (strain ATCC BAA-335 / MC58)).